Here is a 644-residue protein sequence, read N- to C-terminus: Heat shock protein SSC3, mitochondrial (644 aa).

It belongs to the heat shock protein 70 family.

The protein localises to the mitochondrion matrix. Its subcellular location is the mitochondrion nucleoid. In terms of biological role, plays a role in facilitating the assembly of some protein complexes inside the mitochondria. It may initiate the events that lead to refolding of imported precursors in the matrix space. The protein is Heat shock protein SSC3, mitochondrial (ECM10) of Saccharomyces cerevisiae (strain ATCC 204508 / S288c) (Baker's yeast).